The following is a 148-amino-acid chain: 3-hydroxyacyl-[acyl-carrier-protein] dehydratase FabZ (148 aa).

The active site involves histidine 50.

It belongs to the thioester dehydratase family. FabZ subfamily.

The protein resides in the cytoplasm. The catalysed reaction is a (3R)-hydroxyacyl-[ACP] = a (2E)-enoyl-[ACP] + H2O. In terms of biological role, involved in unsaturated fatty acids biosynthesis. Catalyzes the dehydration of short chain beta-hydroxyacyl-ACPs and long chain saturated and unsaturated beta-hydroxyacyl-ACPs. The protein is 3-hydroxyacyl-[acyl-carrier-protein] dehydratase FabZ of Lactobacillus helveticus (strain DPC 4571).